The sequence spans 504 residues: MAFPGPRVLVVGSGIAGLGAAQKLCSHRAAPHLRVLEATASAGGRIRSERCFGGVVELGAHWIHGPSQDNPVFQLAAEFGLLGEKELSEENQLVDTGGHVALPSMIWSSSGTSVSLELMTEMARLFYGLIERTREFLNESETPMASVGEFLKKEISQQVASWTEDDEDTRKRKLAILNTFFNIECCVSGTHSMDLVALAPFGEYTVLPGLDCILAGGYQGLTDRILASLPKDTVAFDKPVKTIHWNGSFQEAAFPGETFPVLVECEDGARLPAHHVIVTVPLGFLKEHQDTFFEPPLPAKKAEAIKKLGFGTNNKIFLEFEEPFWEPDCQFIQVVWEDTSPLQDTALSLQDTWFKKLIGFLVQPSFESSHVLCGFIAGLESEFMETLSDEEVLLSLTQVLRRVTGNPQLPAAKSVRRSQWHSAPYTRGSYSYVAVGSTGDDLDLMAQPLPEDGTGTQLQVLFAGEATHRTFYSTTHGALLSGWREADRLVSLWDSQVEQSRPRL.

FAD contacts are provided by residues Ala-16, Glu-37, Arg-45, and 61–62; that span reads HW. Substrate is bound by residues His-64 and Val-187. FAD is bound at residue Val-240. Substrate is bound at residue Asn-313. Residues Glu-465 and 474-475 contribute to the FAD site; that span reads TT. Residues 502-504 carry the Microbody targeting signal motif; the sequence is PRL.

This sequence belongs to the flavin monoamine oxidase family. As to quaternary structure, monomer. The cofactor is FAD. In terms of tissue distribution, widely expressed at different developmental stages. Expressed at high level in the liver and the stomach, expressed at lower level in heart, spleen, thymus, small intestine, muscle, pancreas, uterus, and breast and expressed at very low level in brain, kidney, lung, testis, skin, adrenal gland and prostate gland.

It localises to the peroxisome. Its subcellular location is the cytoplasm. It carries out the reaction N(1)-acetylspermine + O2 + H2O = 3-acetamidopropanal + spermidine + H2O2. The enzyme catalyses N(1)-acetylspermidine + O2 + H2O = 3-acetamidopropanal + putrescine + H2O2. It catalyses the reaction N(1),N(12)-diacetylspermine + O2 + H2O = 3-acetamidopropanal + N(1)-acetylspermidine + H2O2. It participates in amine and polyamine metabolism; spermine metabolism. Functionally, flavoenzyme which catalyzes the oxidation of N(1)-acetylspermine to spermidine and is thus involved in the polyamine back-conversion. Can also oxidize N(1)-acetylspermidine to putrescine. Substrate specificity: N(1)-acetylspermine = N(1)-acetylspermidine &gt; N(1),N(12)-diacylspermine &gt;&gt; spermine. Does not oxidize spermidine. Plays an important role in the regulation of polyamine intracellular concentration and has the potential to act as a determinant of cellular sensitivity to the antitumor polyamine analogs. This Mus musculus (Mouse) protein is Peroxisomal N(1)-acetyl-spermine/spermidine oxidase (Paox).